The chain runs to 295 residues: Trimeric intracellular cation channel type 1B.1 (295 aa).

Residues 1–27 lie on the Lumenal side of the membrane; the sequence is MVVPESFQLDQEILLDAGAQLHRLKMY. Residues 28–45 traverse the membrane as a helical segment; that stretch reads PYFDVAHYLLMIIEVRDD. Residues 46-56 are Cytoplasmic-facing; the sequence is LGSAASIFSRK. The chain crosses the membrane as a discontinuously helical span at residues 57–80; sequence HPLSCWLSSMLMCFADAFLANFLL. Over 81–89 the chain is Lumenal; sequence GEPVIAPFK. A helical membrane pass occupies residues 90 to 107; sequence RHDDIILATIIWYLVFYA. The Cytoplasmic portion of the chain corresponds to 108-119; it reads PFDGIYKIAKIT. Residues 120–148 form a helical membrane-spanning segment; it reads PVKCVLAVMKEVKRAYKVSHGVSHAAKLY. Positions 129 and 133 each coordinate a 1,2-diacyl-sn-glycero-3-phospho-(1D-myo-inositol-4,5-bisphosphate). Residues 149 to 150 lie on the Lumenal side of the membrane; sequence PN. The chain crosses the membrane as a discontinuously helical span at residues 151 to 177; that stretch reads SYIVQVLVGTAKGAGSGIVRTLEQLVR. Ser166 contacts a 1,2-diacyl-sn-glycero-3-phospho-(1D-myo-inositol-4,5-bisphosphate). The Cytoplasmic segment spans residues 178 to 188; sequence GVWLPTHNELL. Residues 189-210 form a helical membrane-spanning segment; that stretch reads RPSFATKACVVAASVLALEKSG. Residues 211 to 215 lie on the Lumenal side of the membrane; that stretch reads TYLTA. Residues 216–239 form a helical membrane-spanning segment; sequence PHDLVYLVIVGFFVYFKLSAVILH. Topologically, residues 240–295 are cytoplasmic; it reads VTDPFAPIENLFCAIFMGGIWDAVSRALAASRDRRAAGAHSNENGSSISTPEKKDQ. A disordered region spans residues 274–295; it reads RAAGAHSNENGSSISTPEKKDQ.

The protein belongs to the TMEM38 family. In terms of assembly, homotrimer; trimerization probably requires binding to phosphatidylinositol 4,5-bisphosphate (PIP2).

It is found in the endoplasmic reticulum membrane. Potassium channel that mediates transmembrane potassium transport. Might be required for maintenance of rapid intracellular calcium release. May act as a counter-ion channel that functions in synchronization with calcium release from intracellular stores. Binds phosphatidylinositol 4,5-bisphosphate (PIP2). The polypeptide is Trimeric intracellular cation channel type 1B.1 (Caenorhabditis elegans).